Consider the following 319-residue polypeptide: Ornithine carbamoyltransferase (319 aa).

Residues 55 to 58, Q82, R106, and 133 to 136 contribute to the carbamoyl phosphate site; these read STRT and HPCQ. Residues N171, D234, and 238 to 239 each bind L-ornithine; that span reads SM. Carbamoyl phosphate contacts are provided by residues 274-275 and R302; that span reads CL.

It belongs to the aspartate/ornithine carbamoyltransferase superfamily. OTCase family.

It is found in the cytoplasm. The enzyme catalyses carbamoyl phosphate + L-ornithine = L-citrulline + phosphate + H(+). Its pathway is amino-acid biosynthesis; L-arginine biosynthesis; L-arginine from L-ornithine and carbamoyl phosphate: step 1/3. Reversibly catalyzes the transfer of the carbamoyl group from carbamoyl phosphate (CP) to the N(epsilon) atom of ornithine (ORN) to produce L-citrulline. This chain is Ornithine carbamoyltransferase (argF), found in Corynebacterium glutamicum (strain ATCC 13032 / DSM 20300 / JCM 1318 / BCRC 11384 / CCUG 27702 / LMG 3730 / NBRC 12168 / NCIMB 10025 / NRRL B-2784 / 534).